We begin with the raw amino-acid sequence, 535 residues long: Bifunctional purine biosynthesis protein PurH (535 aa).

An MGS-like domain is found at 6 to 151 (TRLPVRRALI…KNHKDVAIVV (146 aa)).

The protein belongs to the PurH family.

The catalysed reaction is (6R)-10-formyltetrahydrofolate + 5-amino-1-(5-phospho-beta-D-ribosyl)imidazole-4-carboxamide = 5-formamido-1-(5-phospho-D-ribosyl)imidazole-4-carboxamide + (6S)-5,6,7,8-tetrahydrofolate. It catalyses the reaction IMP + H2O = 5-formamido-1-(5-phospho-D-ribosyl)imidazole-4-carboxamide. The protein operates within purine metabolism; IMP biosynthesis via de novo pathway; 5-formamido-1-(5-phospho-D-ribosyl)imidazole-4-carboxamide from 5-amino-1-(5-phospho-D-ribosyl)imidazole-4-carboxamide (10-formyl THF route): step 1/1. Its pathway is purine metabolism; IMP biosynthesis via de novo pathway; IMP from 5-formamido-1-(5-phospho-D-ribosyl)imidazole-4-carboxamide: step 1/1. The sequence is that of Bifunctional purine biosynthesis protein PurH from Azotobacter vinelandii (strain DJ / ATCC BAA-1303).